Consider the following 330-residue polypeptide: Aspartate--ammonia ligase (330 aa).

The protein belongs to the class-II aminoacyl-tRNA synthetase family. AsnA subfamily.

It localises to the cytoplasm. The catalysed reaction is L-aspartate + NH4(+) + ATP = L-asparagine + AMP + diphosphate + H(+). The protein operates within amino-acid biosynthesis; L-asparagine biosynthesis; L-asparagine from L-aspartate (ammonia route): step 1/1. The protein is Aspartate--ammonia ligase of Haemophilus influenzae (strain PittEE).